Consider the following 377-residue polypeptide: Nitric oxide reductase FlRd-NAD(+) reductase (377 aa).

Belongs to the FAD-dependent oxidoreductase family. It depends on FAD as a cofactor.

It is found in the cytoplasm. It carries out the reaction 2 reduced [nitric oxide reductase rubredoxin domain] + NAD(+) + H(+) = 2 oxidized [nitric oxide reductase rubredoxin domain] + NADH. It functions in the pathway nitrogen metabolism; nitric oxide reduction. One of at least two accessory proteins for anaerobic nitric oxide (NO) reductase. Reduces the rubredoxin moiety of NO reductase. This Salmonella paratyphi A (strain AKU_12601) protein is Nitric oxide reductase FlRd-NAD(+) reductase.